Reading from the N-terminus, the 147-residue chain is Hemoglobin subunit epsilon (147 aa).

In terms of domain architecture, Globin spans 3 to 147 (HFTAEEKTAI…VASALAHKYH (145 aa)). Residues S14 and S51 each carry the phosphoserine modification. The heme b site is built by H64 and H93.

Belongs to the globin family. As to expression, red blood cells.

Functionally, hemoglobin epsilon chain is an embryonic-type beta-type chain found in prenatal and neonatal marsupials. The protein is Hemoglobin subunit epsilon (HBE1) of Notamacropus eugenii (Tammar wallaby).